A 320-amino-acid chain; its full sequence is Dual oxidase maturation factor 2 (320 aa).

Residues 1-21 (MTLWNGVLPFYPQPRHAAGFS) lie on the Extracellular side of the membrane. A helical membrane pass occupies residues 22–42 (VPLLIVILVFLALAASFLLIL). The Cytoplasmic segment spans residues 43 to 56 (PGIRGHSRWFWLVR). Residues 57–77 (VLLSLFIGAEIVAVHFSAEWF) traverse the membrane as a helical segment. The Extracellular segment spans residues 78–183 (VGTVNTNTSY…HLAGHYASAT (106 aa)). Residues asparagine 84, asparagine 109, and asparagine 121 are each glycosylated (N-linked (GlcNAc...) asparagine). Residues 184–204 (LWVAFCFWLLSNVLLSTPAPL) form a helical membrane-spanning segment. The Cytoplasmic segment spans residues 205-206 (YG). A helical transmembrane segment spans residues 207–227 (GLALLTTGAFALFGVFALASI). The Extracellular portion of the chain corresponds to 228–247 (SSVPLCPLRLGSSALTTQYG). The chain crosses the membrane as a helical span at residues 248–268 (AAFWVTLATGVLCLFLGGAVV). Residues 269 to 320 (SLQYVRPSALRTLLDQSAKDCSQERGGSPLILGDPLHKQAALPDLKCITTNL) are Cytoplasmic-facing.

This sequence belongs to the DUOXA family. As to quaternary structure, heterodimer with DUXA2; disulfide-linked. Interacts with CSNK1G2. N-glycosylated. As to expression, specifically expressed in thyroid. Also detected in salivary glands.

The protein resides in the endoplasmic reticulum membrane. In terms of biological role, required for the maturation and the transport from the endoplasmic reticulum to the plasma membrane of functional DUOX2. May play a role in thyroid hormone synthesis. The protein is Dual oxidase maturation factor 2 (DUOXA2) of Homo sapiens (Human).